Here is a 539-residue protein sequence, read N- to C-terminus: Probable protein kinase UbiB (539 aa).

A helical membrane pass occupies residues 23–43 (DLLFALPLPWWMLAVRFVLPW). Positions 125 to 492 (RFDETPLASA…WHDRKDEPVL (368 aa)) constitute a Protein kinase domain. Residues 131-139 (LASASVAQV) and Lys-153 each bind ATP. The active-site Proton acceptor is the Asp-288. The next 2 helical transmembrane spans lie at 494–514 (LIGA…SEAA) and 517–537 (LLTL…YLIV).

Belongs to the ABC1 family. UbiB subfamily.

The protein resides in the cell inner membrane. Its pathway is cofactor biosynthesis; ubiquinone biosynthesis [regulation]. Its function is as follows. Is probably a protein kinase regulator of UbiI activity which is involved in aerobic coenzyme Q (ubiquinone) biosynthesis. This Pseudomonas syringae pv. tomato (strain ATCC BAA-871 / DC3000) protein is Probable protein kinase UbiB.